The primary structure comprises 244 residues: Futalosine hydrolase (244 aa).

Belongs to the PNP/UDP phosphorylase family. Futalosine hydrolase subfamily.

It catalyses the reaction futalosine + H2O = dehypoxanthine futalosine + hypoxanthine. It participates in quinol/quinone metabolism; menaquinone biosynthesis. Catalyzes the hydrolysis of futalosine (FL) to dehypoxanthine futalosine (DHFL) and hypoxanthine, a step in the biosynthesis of menaquinone (MK, vitamin K2). Cannot directly use aminodeoxyfutalosine (AFL) as a substrate. The polypeptide is Futalosine hydrolase (Acidothermus cellulolyticus (strain ATCC 43068 / DSM 8971 / 11B)).